The following is a 187-amino-acid chain: Elongation factor P (187 aa).

Belongs to the elongation factor P family.

It localises to the cytoplasm. The protein operates within protein biosynthesis; polypeptide chain elongation. Functionally, involved in peptide bond synthesis. Stimulates efficient translation and peptide-bond synthesis on native or reconstituted 70S ribosomes in vitro. Probably functions indirectly by altering the affinity of the ribosome for aminoacyl-tRNA, thus increasing their reactivity as acceptors for peptidyl transferase. The sequence is that of Elongation factor P from Rhodococcus opacus (strain B4).